The sequence spans 462 residues: L-seryl-tRNA(Sec) selenium transferase (462 aa).

Lys292 bears the N6-(pyridoxal phosphate)lysine mark.

Belongs to the SelA family. Requires pyridoxal 5'-phosphate as cofactor.

It is found in the cytoplasm. The catalysed reaction is L-seryl-tRNA(Sec) + selenophosphate + H(+) = L-selenocysteinyl-tRNA(Sec) + phosphate. It participates in aminoacyl-tRNA biosynthesis; selenocysteinyl-tRNA(Sec) biosynthesis; selenocysteinyl-tRNA(Sec) from L-seryl-tRNA(Sec) (bacterial route): step 1/1. Its function is as follows. Converts seryl-tRNA(Sec) to selenocysteinyl-tRNA(Sec) required for selenoprotein biosynthesis. In Geotalea daltonii (strain DSM 22248 / JCM 15807 / FRC-32) (Geobacter daltonii), this protein is L-seryl-tRNA(Sec) selenium transferase.